The chain runs to 273 residues: Protein OPG070 (273 aa).

2 consecutive transmembrane segments (helical) span residues 123-143 and 238-260; these read NEFISFLLLTSIPIYNILFWF and FLLFYVPGYSITTKITPAVEYLM.

The protein belongs to the orthopoxvirus OPG070 family. Phosphorylated by OPG054/F10L kinase in vitro.

It localises to the virion. The protein resides in the host endoplasmic reticulum membrane. Its subcellular location is the host cytoplasm. Its function is as follows. May play a role in the biogenesis of the viral factories by recruiting and wrapping DNA replication sites in endoplasmic reticulum derived membranes. Later in infection, phosphorylation by the late viral kinase OPG054/F10L might decrease DNA-binding ability and trigger ER membranes disassembly. Binds DNA in vitro. The chain is Protein OPG070 (OPG070) from Vaccinia virus (strain Western Reserve) (VACV).